Consider the following 133-residue polypeptide: Small ribosomal subunit protein uS15 (133 aa).

It belongs to the universal ribosomal protein uS15 family. As to quaternary structure, part of the 30S ribosomal subunit.

This is Small ribosomal subunit protein uS15 from Methanosphaera stadtmanae (strain ATCC 43021 / DSM 3091 / JCM 11832 / MCB-3).